We begin with the raw amino-acid sequence, 406 residues long: Imidazolonepropionase (406 aa).

Residues H74 and H76 each contribute to the Fe(3+) site. H74 and H76 together coordinate Zn(2+). Residues R83, Y146, and H179 each coordinate 4-imidazolone-5-propanoate. Y146 contributes to the N-formimidoyl-L-glutamate binding site. Fe(3+) is bound at residue H240. H240 contributes to the Zn(2+) binding site. E243 contributes to the 4-imidazolone-5-propanoate binding site. Residue D314 coordinates Fe(3+). D314 contributes to the Zn(2+) binding site. N-formimidoyl-L-glutamate is bound by residues N316 and G318. Residue S319 participates in 4-imidazolone-5-propanoate binding.

Belongs to the metallo-dependent hydrolases superfamily. HutI family. Zn(2+) is required as a cofactor. Fe(3+) serves as cofactor.

It localises to the cytoplasm. It catalyses the reaction 4-imidazolone-5-propanoate + H2O = N-formimidoyl-L-glutamate. It functions in the pathway amino-acid degradation; L-histidine degradation into L-glutamate; N-formimidoyl-L-glutamate from L-histidine: step 3/3. In terms of biological role, catalyzes the hydrolytic cleavage of the carbon-nitrogen bond in imidazolone-5-propanoate to yield N-formimidoyl-L-glutamate. It is the third step in the universal histidine degradation pathway. The sequence is that of Imidazolonepropionase from Kosmotoga olearia (strain ATCC BAA-1733 / DSM 21960 / TBF 19.5.1).